The sequence spans 1466 residues: Collagen alpha-1(III) chain (1466 aa).

The signal sequence occupies residues M1–A23. The propeptide at Q24–P153 is N-terminal propeptide. The VWFC domain maps to G30–P89. The tract at residues P95 to G1194 is disordered. Over residues P99–K108 the composition is skewed to low complexity. The segment covering T146–Y155 has biased composition (polar residues). A nonhelical region (N-terminal) region spans residues Q149–G167. The triple-helical region stretch occupies residues G168–C1196. P173, P179, P182, P185, P191, P194, P197, P203, P206, P215, P218, P236, P239, P245, P248, P257, and P260 each carry 4-hydroxyproline. A compositionally biased stretch (pro residues) spans P175 to P185. Residues T187–Y199 show a composition bias toward low complexity. Residues K229 to E241 are compositionally biased toward basic and acidic residues. Residues K251–P260 show a composition bias toward low complexity. Position 263 is a 5-hydroxylysine; alternate (K263). K263 carries O-linked (Gal...) hydroxylysine; alternate glycosylation. Over residues R266 to E277 the composition is skewed to basic and acidic residues. Residue P281 is modified to 4-hydroxyproline. K284 bears the 5-hydroxylysine mark. Residues P290, P296, P305, P311, P314, P332, P335, P338, P344, P347, P359, P365, P371, P383, P386, P392, P404, P407, P416, P425, P434, P443, P455, P458, P470, P473, P479, P488, P500, P512, P524, P530, P533, P539, P542, P545, P551, P554, P563, P566, P575, P581, P590, P599, P602, P608, P620, P635, P644, P650, P656, P659, P661, P668, P671, P680, P686, P692, P701, P703, P713, P716, P722, P728, P737, P746, P749, P755, P770, P776, P785, P788, P797, P806, P812, P815, P821, P830, P839, P845, and P854 each carry the 4-hydroxyproline modification. Positions P311 to N322 are enriched in low complexity. Over residues P355–Q380 the composition is skewed to low complexity. The span at G390–G399 shows a compositional bias: gly residues. Residues P404–P425 show a composition bias toward low complexity. Residues G426 to G435 show a composition bias toward gly residues. Residues L478 to E523 are compositionally biased toward low complexity. Residues G528 to G549 are compositionally biased toward gly residues. Over residues G642 to G651 the composition is skewed to gly residues. Residues G669–G678 are compositionally biased toward gly residues. Positions A679 to P692 are enriched in low complexity. Over residues G693 to G711 the composition is skewed to gly residues. A compositionally biased stretch (gly residues) spans G729–G738. The segment covering L787–S796 has biased composition (low complexity). The span at G823–E835 shows a compositional bias: basic and acidic residues. Gly residues predominate over residues G836 to P850. K860 is modified (5-hydroxylysine). Residues G864–G873 show a composition bias toward gly residues. 4-hydroxyproline occurs at positions 866, 869, 875, 881, 884, 890, 892, 899, 905, 914, 917, 929, 935, 941, and 944. Pro residues predominate over residues P890–P907. Over residues A908–P917 the composition is skewed to low complexity. Positions P946–P961 are enriched in low complexity. Residues P962, P965, and P971 each carry the 4-hydroxyproline modification. K977 carries the 5-hydroxylysine modification. 4-hydroxyproline occurs at positions 983, 995, 1001, 1010, 1016, 1022, 1028, 1040, 1043, 1046, 1049, 1052, 1076, and 1085. Pro residues predominate over residues P1046–V1055. The span at S1067 to P1085 shows a compositional bias: low complexity. K1106 carries the 5-hydroxylysine modification. 14 positions are modified to 4-hydroxyproline: P1112, P1115, P1118, P1121, P1133, P1148, P1157, P1163, P1178, P1181, P1184, P1187, P1190, and P1193. A compositionally biased stretch (low complexity) spans P1123–P1133. Positions P1181–P1193 are enriched in pro residues. The interval C1197–I1205 is nonhelical region (C-terminal). The propeptide at D1222 to L1466 is C-terminal propeptide. Positions D1232 to L1466 constitute a Fibrillar collagen NC1 domain. 3 disulfides stabilise this stretch: C1262/C1294, C1302/C1464, and C1372/C1417. Ca(2+) is bound by residues D1280, N1282, Q1283, C1285, and D1288.

The protein belongs to the fibrillar collagen family. As to quaternary structure, trimers of identical alpha 1(III) chains. The chains are linked to each other by interchain disulfide bonds. Trimers are also cross-linked via hydroxylysines. Interacts with ADGRG1. In terms of processing, proline residues at the third position of the tripeptide repeating unit (G-X-Y) are hydroxylated in some or all of the chains. O-linked glycan consists of a Glc-Gal disaccharide bound to the oxygen atom of a post-translationally added hydroxyl group.

The protein localises to the secreted. It is found in the extracellular space. Its subcellular location is the extracellular matrix. Functionally, collagen type III occurs in most soft connective tissues along with type I collagen. Involved in regulation of cortical development. Is the major ligand of ADGRG1 in the developing brain and binding to ADGRG1 inhibits neuronal migration and activates the RhoA pathway by coupling ADGRG1 to GNA13 and possibly GNA12. The polypeptide is Collagen alpha-1(III) chain (COL3A1) (Homo sapiens (Human)).